The primary structure comprises 139 residues: Putative pre-16S rRNA nuclease (139 aa).

The protein belongs to the YqgF nuclease family.

The protein resides in the cytoplasm. In terms of biological role, could be a nuclease involved in processing of the 5'-end of pre-16S rRNA. This is Putative pre-16S rRNA nuclease from Streptococcus uberis (strain ATCC BAA-854 / 0140J).